The sequence spans 193 residues: Fibrillarin-like rRNA/tRNA 2'-O-methyltransferase (193 aa).

Residues 82–83 (TT), 100–101 (EF), 125–126 (DA), and 145–148 (DVAQ) each bind S-adenosyl-L-methionine.

The protein belongs to the methyltransferase superfamily. Fibrillarin family. In terms of assembly, interacts with nop5. Component of box C/D small ribonucleoprotein (sRNP) particles that contain rpl7ae, FlpA and nop5, plus a guide RNA.

In terms of biological role, involved in pre-rRNA and tRNA processing. Utilizes the methyl donor S-adenosyl-L-methionine to catalyze the site-specific 2'-hydroxyl methylation of ribose moieties in rRNA and tRNA. Site specificity is provided by a guide RNA that base pairs with the substrate. Methylation occurs at a characteristic distance from the sequence involved in base pairing with the guide RNA. The chain is Fibrillarin-like rRNA/tRNA 2'-O-methyltransferase from Methanosarcina mazei (Methanosarcina frisia).